Reading from the N-terminus, the 98-residue chain is NADH-ubiquinone oxidoreductase chain 4L (98 aa).

Transmembrane regions (helical) follow at residues 1 to 21, 29 to 49, and 61 to 81; these read MSMV…GLLM, SLLC…MTIL, and IILL…LVMV.

The protein belongs to the complex I subunit 4L family. Core subunit of respiratory chain NADH dehydrogenase (Complex I) which is composed of 45 different subunits.

The protein localises to the mitochondrion inner membrane. The catalysed reaction is a ubiquinone + NADH + 5 H(+)(in) = a ubiquinol + NAD(+) + 4 H(+)(out). In terms of biological role, core subunit of the mitochondrial membrane respiratory chain NADH dehydrogenase (Complex I) which catalyzes electron transfer from NADH through the respiratory chain, using ubiquinone as an electron acceptor. Part of the enzyme membrane arm which is embedded in the lipid bilayer and involved in proton translocation. This Phocarctos hookeri (Hooker's sea lion) protein is NADH-ubiquinone oxidoreductase chain 4L (MT-ND4L).